The chain runs to 448 residues: Trigger factor (448 aa).

The PPIase FKBP-type domain maps to 172–257 (GDRVTVDFVG…MKKIEWPHLP (86 aa)).

This sequence belongs to the FKBP-type PPIase family. Tig subfamily.

It localises to the cytoplasm. It carries out the reaction [protein]-peptidylproline (omega=180) = [protein]-peptidylproline (omega=0). Its function is as follows. Involved in protein export. Acts as a chaperone by maintaining the newly synthesized protein in an open conformation. Functions as a peptidyl-prolyl cis-trans isomerase. The sequence is that of Trigger factor from Burkholderia ambifaria (strain ATCC BAA-244 / DSM 16087 / CCUG 44356 / LMG 19182 / AMMD) (Burkholderia cepacia (strain AMMD)).